Reading from the N-terminus, the 234-residue chain is UstYa family oxidase phomYd' (234 aa).

Positions M1 to S26 are disordered. A helical transmembrane segment spans residues V47–W69. An HXXHC 1 motif is present at residues H151 to C155. Residue N208 is glycosylated (N-linked (GlcNAc...) asparagine).

The protein belongs to the ustYa family.

Its subcellular location is the membrane. It functions in the pathway mycotoxin biosynthesis. Functionally, ustYa family oxidase; part of the gene cluster that mediates the biosynthesis of the phomopsins, a group of hexapeptide mycotoxins which infects lupins and causes lupinosis disease in livestock. Within the pathway, phomYd' catalyzes the desaturation of the Asp moiety into 2,3-dehydroaspartic acid (dAsp). The pathway starts with the processing of the precursor phomA' by several endopeptidases including kexin proteases as well as the cluster-specific S41 family peptidase phomP1 and the oligopeptidase phomG' to produce 10 identical copies of the hexapeptide Tyr-Val-Ile-Pro-Ile-Asp. After being excised from the precursor peptide, the core peptides are cyclized and modified post-translationally by enzymes encoded within the gene cluster. The timing and order of proteolysis of the phomA' precursor and PTMs are still unknown. Two tyrosinase-like enzymes, phomQ1' and phomQ2, catalyze the chlorination and hydroxylation of Tyr, respectively. PhomYb, is proposed to be involved in the construction of the macrocyclic structure. The other 4 ustYa family proteins may be involved in PTMs that generate the unique structure of phomopsin A. PhomYa' is required for the hydroxylation of C-beta of Tyr. PhomYc', phomYd', and phomYe are responsible for the biosynthesis of 2,3-dehydroisoleucine (dIle), 2,3-dehydroaspartic acid (dAsp), and 3,4-dehydroproline (dPro), respectively. While dIle formation by phomYc' is indispensable for the installation of dAsp by phomYd', the order of the other PTMs have not been elucidated yet. Most of the biosynthetic enzymes likely have broad substrate specificity, and thus, there might be a metabolic grid from a precursor to phomopsin A. The enzyme(s) responsible for the biosynthesis of 3,4-dehydrovaline (dVal) have also not been identified yet. Finally, phomM' acts as an S-adenosylmethionine-dependent alpha-N-methyltransferase that catalyzes two successive N-methylation reactions, converting N-desmethyl-phomopsin A to phomopsin A and phomopsin A further to an N,N-dimethylated congener called phomopsin E. This Diaporthe leptostromiformis (Lupinosis disease fungus) protein is UstYa family oxidase phomYd'.